Here is a 156-residue protein sequence, read N- to C-terminus: uncharacterized protein (156 aa).

2 disordered regions span residues 22-64 (KERV…VLKK) and 81-156 (AARA…DENE). The segment covering 43–56 (PEEDGDHSDKEDEQ) has biased composition (acidic residues). S50 is subject to Phosphoserine. Residue K108 is modified to N6-acetyllysine. A compositionally biased stretch (basic and acidic residues) spans 121–134 (TKEEDEINKQDSVK). A Phosphoserine modification is found at S148.

This is an uncharacterized protein from Bos taurus (Bovine).